A 130-amino-acid chain; its full sequence is Small ribosomal subunit protein uS9 (130 aa).

It belongs to the universal ribosomal protein uS9 family.

The protein is Small ribosomal subunit protein uS9 of Halalkalibacterium halodurans (strain ATCC BAA-125 / DSM 18197 / FERM 7344 / JCM 9153 / C-125) (Bacillus halodurans).